The sequence spans 467 residues: MAP kinase-interacting serine/threonine-protein kinase 2 (467 aa).

One can recognise a Protein kinase domain in the interval 83 to 367 (QLQQEILGEG…AAQVLQHPWV (285 aa)). ATP contacts are provided by residues 89–97 (LGEGAYAKV) and Lys112. Asp204 (proton acceptor) is an active-site residue. Residues Cys298, Cys310, and Cys313 each coordinate Zn(2+). Residues 432–467 (MQLSPPSESKLAKRRQQGSKGGISPPSLAPLLIVSD) form a disordered region.

It belongs to the protein kinase superfamily. CAMK Ser/Thr protein kinase family. Mg(2+) is required as a cofactor. The cofactor is Zn(2+).

It carries out the reaction L-seryl-[protein] + ATP = O-phospho-L-seryl-[protein] + ADP + H(+). The enzyme catalyses L-threonyl-[protein] + ATP = O-phospho-L-threonyl-[protein] + ADP + H(+). Functionally, may play a role in the response to environmental stress and cytokines. Appears to regulate translation by phosphorylating EIF4E, thus increasing the affinity of this protein for the 7-methylguanosine-containing mRNA cap. The chain is MAP kinase-interacting serine/threonine-protein kinase 2 (mknk2) from Xenopus laevis (African clawed frog).